The chain runs to 603 residues: Vacuolar protein sorting-associated protein 33A (603 aa).

The protein belongs to the STXBP/unc-18/SEC1 family. Probable component of the homotypic fusion and vacuole protein sorting (HOPS) complex consisting of the core class C Vps proteins vps-11, vps-16, vps-18, and which further associates with vps-33.1, vps-39 and vps-41. Interacts with spe-39. Ubiquitously expressed at high levels in somatic tissues including the pharynx, muscles, hypodermis, neurons, coelomocytes and spermatheca. Expressed in the intestine.

It localises to the lysosome. Its subcellular location is the early endosome. The protein resides in the late endosome. It is found in the apical cell membrane. In terms of biological role, plays a role in vesicle-mediated protein trafficking to lysosomal compartments including the endocytic membrane transport pathways. Believed to act as a component of the putative HOPS endosomal tethering complex which is proposed to be involved in the rab-5-to-rab-7 endosome conversion probably implicating sand-1, and via binding SNAREs and SNARE complexes to mediate tethering and docking events during SNARE-mediated membrane fusion. The HOPS complex is proposed to be recruited to rab-7 on the late endosomal membrane and to regulate late endocytic, phagocytic and autophagic traffic towards lysosomes. Within the HOPS complex, contributes to the normal development of gut granules in embryonic and adult intestinal cells. Required for endosome/lysosome fusion. Required for early embryonic development. The sequence is that of Vacuolar protein sorting-associated protein 33A from Caenorhabditis elegans.